The following is a 453-amino-acid chain: UDP-N-acetylmuramoylalanine--D-glutamate ligase (453 aa).

120 to 126 (GSNGKST) serves as a coordination point for ATP.

It belongs to the MurCDEF family.

The protein localises to the cytoplasm. The enzyme catalyses UDP-N-acetyl-alpha-D-muramoyl-L-alanine + D-glutamate + ATP = UDP-N-acetyl-alpha-D-muramoyl-L-alanyl-D-glutamate + ADP + phosphate + H(+). The protein operates within cell wall biogenesis; peptidoglycan biosynthesis. Cell wall formation. Catalyzes the addition of glutamate to the nucleotide precursor UDP-N-acetylmuramoyl-L-alanine (UMA). The protein is UDP-N-acetylmuramoylalanine--D-glutamate ligase of Nitrosococcus oceani (strain ATCC 19707 / BCRC 17464 / JCM 30415 / NCIMB 11848 / C-107).